Reading from the N-terminus, the 255-residue chain is Type III pantothenate kinase (255 aa).

6–13 (DIGNTNIK) is a binding site for ATP. Substrate is bound at residue 107 to 110 (GADR). Catalysis depends on Asp-109, which acts as the Proton acceptor. Residue Thr-132 participates in ATP binding. Residue Thr-184 coordinates substrate.

The protein belongs to the type III pantothenate kinase family. Homodimer. NH4(+) is required as a cofactor. K(+) serves as cofactor.

It is found in the cytoplasm. The catalysed reaction is (R)-pantothenate + ATP = (R)-4'-phosphopantothenate + ADP + H(+). The protein operates within cofactor biosynthesis; coenzyme A biosynthesis; CoA from (R)-pantothenate: step 1/5. In terms of biological role, catalyzes the phosphorylation of pantothenate (Pan), the first step in CoA biosynthesis. The protein is Type III pantothenate kinase of Roseiflexus castenholzii (strain DSM 13941 / HLO8).